A 95-amino-acid polypeptide reads, in one-letter code: Aspartyl/glutamyl-tRNA(Asn/Gln) amidotransferase subunit C (95 aa).

The protein belongs to the GatC family. In terms of assembly, heterotrimer of A, B and C subunits.

It carries out the reaction L-glutamyl-tRNA(Gln) + L-glutamine + ATP + H2O = L-glutaminyl-tRNA(Gln) + L-glutamate + ADP + phosphate + H(+). The enzyme catalyses L-aspartyl-tRNA(Asn) + L-glutamine + ATP + H2O = L-asparaginyl-tRNA(Asn) + L-glutamate + ADP + phosphate + 2 H(+). Allows the formation of correctly charged Asn-tRNA(Asn) or Gln-tRNA(Gln) through the transamidation of misacylated Asp-tRNA(Asn) or Glu-tRNA(Gln) in organisms which lack either or both of asparaginyl-tRNA or glutaminyl-tRNA synthetases. The reaction takes place in the presence of glutamine and ATP through an activated phospho-Asp-tRNA(Asn) or phospho-Glu-tRNA(Gln). The protein is Aspartyl/glutamyl-tRNA(Asn/Gln) amidotransferase subunit C of Chlorobium phaeovibrioides (strain DSM 265 / 1930) (Prosthecochloris vibrioformis (strain DSM 265)).